Reading from the N-terminus, the 228-residue chain is Ribosomal RNA small subunit methyltransferase G (228 aa).

Residues G70, 121 to 122, and R138 each bind S-adenosyl-L-methionine; that span reads AE.

Belongs to the methyltransferase superfamily. RNA methyltransferase RsmG family.

It is found in the cytoplasm. In terms of biological role, specifically methylates the N7 position of a guanine in 16S rRNA. This is Ribosomal RNA small subunit methyltransferase G from Thermotoga sp. (strain RQ2).